Reading from the N-terminus, the 202-residue chain is Matrix protein (202 aa).

The PPXY motif signature appears at 35–38 (PPEY). The tract at residues 115-151 (KLRRTLIFQWADSRGPLEGEELEYSQEITWDDDTEFV) is essential for glycoprotein binding.

It belongs to the lyssavirus matrix protein family. In terms of assembly, homomultimer. Interacts with nucleoprotein and with the cytoplasmic domain of glycoprotein. Interacts with host ATP6V1A; this interaction plays an important role in virion uncoating after viral entry.

The protein localises to the virion membrane. Its subcellular location is the host endomembrane system. It localises to the host cytoplasm. Its function is as follows. Plays a major role in assembly, budding and uncoating of virion after membrane fusion. Completely covers the ribonucleoprotein coil and keep it in condensed bullet-shaped form. Inhibits viral transcription and stimulates replication. Plays a major role in early induction of TRAIL-mediated apoptosis in infected neurons. Inhibits the integrated stress response (ISR) in the infected cell by blocking the formation of stress granules. This Homo sapiens (Human) protein is Matrix protein (M).